A 152-amino-acid polypeptide reads, in one-letter code: MTKERTFIAIKPDGVQRGYVSEIIGRFEKKGFKLVGLKQLIPSKDLAQNHYGVHRERPFFGDLVDFISSGPVVAMVWEGEGVILSARKLIGATKPLEAEPGTIRGDLAIDIGRNIIHGSDGEDTAKFEIDLWFNEEELCEWYTSDSKWRSEN.

ATP contacts are provided by Lys-11, Phe-59, Arg-87, Thr-93, Arg-104, and Asn-114. His-117 serves as the catalytic Pros-phosphohistidine intermediate.

It belongs to the NDK family. As to quaternary structure, homotetramer. Mg(2+) serves as cofactor.

It is found in the cytoplasm. It carries out the reaction a 2'-deoxyribonucleoside 5'-diphosphate + ATP = a 2'-deoxyribonucleoside 5'-triphosphate + ADP. It catalyses the reaction a ribonucleoside 5'-diphosphate + ATP = a ribonucleoside 5'-triphosphate + ADP. Major role in the synthesis of nucleoside triphosphates other than ATP. The ATP gamma phosphate is transferred to the NDP beta phosphate via a ping-pong mechanism, using a phosphorylated active-site intermediate. The polypeptide is Nucleoside diphosphate kinase (Prochlorococcus marinus (strain MIT 9312)).